Consider the following 480-residue polypeptide: Phosphoglucosamine mutase (480 aa).

The interval Met-1–Gln-41 is disordered. Ser-127 acts as the Phosphoserine intermediate in catalysis. Mg(2+) contacts are provided by Ser-127, Asp-269, Asp-271, and Asp-273. Residue Ser-127 is modified to Phosphoserine.

Belongs to the phosphohexose mutase family. Mg(2+) serves as cofactor. In terms of processing, activated by phosphorylation.

The enzyme catalyses alpha-D-glucosamine 1-phosphate = D-glucosamine 6-phosphate. In terms of biological role, catalyzes the conversion of glucosamine-6-phosphate to glucosamine-1-phosphate. The protein is Phosphoglucosamine mutase of Sorangium cellulosum (strain So ce56) (Polyangium cellulosum (strain So ce56)).